Here is a 283-residue protein sequence, read N- to C-terminus: Formamidopyrimidine-DNA glycosylase (283 aa).

The active-site Schiff-base intermediate with DNA is Pro2. The active-site Proton donor is the Glu3. The Proton donor; for beta-elimination activity role is filled by Lys58. The DNA site is built by His100, Arg119, and Arg162. The FPG-type zinc finger occupies 247 to 283 (DVYGREGEPCRRAGCTGTVTRITQSGRSSFYCGKCQR). Residue Arg273 is the Proton donor; for delta-elimination activity of the active site.

The protein belongs to the FPG family. Monomer. Zn(2+) serves as cofactor.

The catalysed reaction is Hydrolysis of DNA containing ring-opened 7-methylguanine residues, releasing 2,6-diamino-4-hydroxy-5-(N-methyl)formamidopyrimidine.. The enzyme catalyses 2'-deoxyribonucleotide-(2'-deoxyribose 5'-phosphate)-2'-deoxyribonucleotide-DNA = a 3'-end 2'-deoxyribonucleotide-(2,3-dehydro-2,3-deoxyribose 5'-phosphate)-DNA + a 5'-end 5'-phospho-2'-deoxyribonucleoside-DNA + H(+). Its function is as follows. Involved in base excision repair of DNA damaged by oxidation or by mutagenic agents. Acts as a DNA glycosylase that recognizes and removes damaged bases. Has a preference for oxidized purines, such as 7,8-dihydro-8-oxoguanine (8-oxoG). Has AP (apurinic/apyrimidinic) lyase activity and introduces nicks in the DNA strand. Cleaves the DNA backbone by beta-delta elimination to generate a single-strand break at the site of the removed base with both 3'- and 5'-phosphates. The sequence is that of Formamidopyrimidine-DNA glycosylase from Ruegeria sp. (strain TM1040) (Silicibacter sp.).